Consider the following 229-residue polypeptide: Uracil-DNA glycosylase (229 aa).

Asp-70 acts as the Proton acceptor in catalysis.

The protein belongs to the uracil-DNA glycosylase (UDG) superfamily. UNG family.

It localises to the cytoplasm. The enzyme catalyses Hydrolyzes single-stranded DNA or mismatched double-stranded DNA and polynucleotides, releasing free uracil.. Its function is as follows. Excises uracil residues from the DNA which can arise as a result of misincorporation of dUMP residues by DNA polymerase or due to deamination of cytosine. The polypeptide is Uracil-DNA glycosylase (Chlamydia felis (strain Fe/C-56) (Chlamydophila felis)).